The chain runs to 849 residues: Autoinducer 1 sensor kinase/phosphatase LuxN (849 aa).

7 helical membrane passes run 9–29 (IVYA…MWLF), 41–61 (VIFG…IAWI), 160–180 (SYFF…LVAM), 196–216 (IAGI…MTYF), 220–242 (FSLT…YALL), 251–275 (YIAY…AIFI), and 283–301 (WLIA…QLLY). Positions 468-683 (SIAHEMRNPL…EFHLYFPVVP (216 aa)) constitute a Histidine kinase domain. Residue His471 is modified to Phosphohistidine; by autocatalysis. In terms of domain architecture, Response regulatory spans 722-835 (TVLIVDDKEV…ALRHVLGNWL (114 aa)). 4-aspartylphosphate is present on Asp771.

Its subcellular location is the cell inner membrane. It carries out the reaction ATP + protein L-histidine = ADP + protein N-phospho-L-histidine.. Functionally, at low cell density, in the absence of AI-1 (autoinducer 1), LuxN has a kinase activity and autophosphorylates on His-471. The phosphoryl group is then transferred on Asp-771 of the response regulator domain. The phosphoryl group is transferred to LuxU, and ultimately to LuxO. At high cell density, in the presence of AI-1, the kinase activity is inactivated, and the response regulator domain has a phosphatase activity. LuxN phosphatase acts on itself. As LuxU could function to establish an equilibrium between the aspartyl-phosphate of LuxN and the aspartyl-phosphate of LuxO, LuxU transfers phosphate from LuxO to LuxN and finally phosphate is drained from the system. In Vibrio harveyi (Beneckea harveyi), this protein is Autoinducer 1 sensor kinase/phosphatase LuxN (luxN).